Here is a 133-residue protein sequence, read N- to C-terminus: Small ribosomal subunit protein uS11 (133 aa).

The protein belongs to the universal ribosomal protein uS11 family. Part of the 30S ribosomal subunit.

Its function is as follows. Located on the platform of the 30S subunit. This is Small ribosomal subunit protein uS11 from Pyrobaculum aerophilum (strain ATCC 51768 / DSM 7523 / JCM 9630 / CIP 104966 / NBRC 100827 / IM2).